Here is a 585-residue protein sequence, read N- to C-terminus: Conglutin alpha 3 (585 aa).

Positions 1-23 are cleaved as a signal peptide; that stretch reads MANPFLLSLSLCLVLLYTSACLG. 2 disulfides stabilise this stretch: cysteine 32/cysteine 65 and cysteine 108/cysteine 406. The Cupin type-1 1 domain occupies 37–258; it reads LNALEPDNRI…ALNIDEDTVH (222 aa). Disordered stretches follow at residues 113–147, 199–240, and 283–402; these read EEAQQSQSRQERRRGQRSQSQEQEDSHQKIRHFRE, EEYP…ILSG, and KWQE…NGLE. Residues 136–147 show a composition bias toward basic and acidic residues; that stretch reads EDSHQKIRHFRE. A compositionally biased stretch (basic residues) spans 211–224; that stretch reads RQQHQRPSGRRHGQ. Positions 309–320 are enriched in acidic residues; it reads REEEEKEEEDEP. Over residues 338-350 the composition is skewed to basic and acidic residues; it reads ERGRGRGGSEWKR. A Cupin type-1 2 domain is found at 412–558; sequence ENIADPTRAD…AFRLSLNQVS (147 aa). The span at 565–579 shows a compositional bias: polar residues; that stretch reads NHNPLVTPQSQSQDH. Positions 565-585 are disordered; it reads NHNPLVTPQSQSQDHNLVKVA.

Belongs to the 11S seed storage protein (globulins) family. As to quaternary structure, hexamer; each subunit is composed of an acidic and a basic chain derived from a single precursor and linked by a disulfide bond. Component of globulins complexes which accumulate in seeds.

Functionally, sulfur-rich seed storage protein. This protein found in the seeds of many leguminous and non-leguminous plants is the source of sulfur-containing amino acids in seed meals. The polypeptide is Conglutin alpha 3 (Lupinus angustifolius (Narrow-leaved blue lupine)).